A 194-amino-acid chain; its full sequence is Peptidyl-tRNA hydrolase (194 aa).

Y16 contacts tRNA. H21 functions as the Proton acceptor in the catalytic mechanism. The tRNA site is built by F67, N69, and N115.

Belongs to the PTH family. In terms of assembly, monomer.

It is found in the cytoplasm. The catalysed reaction is an N-acyl-L-alpha-aminoacyl-tRNA + H2O = an N-acyl-L-amino acid + a tRNA + H(+). In terms of biological role, hydrolyzes ribosome-free peptidyl-tRNAs (with 1 or more amino acids incorporated), which drop off the ribosome during protein synthesis, or as a result of ribosome stalling. Functionally, catalyzes the release of premature peptidyl moieties from peptidyl-tRNA molecules trapped in stalled 50S ribosomal subunits, and thus maintains levels of free tRNAs and 50S ribosomes. This is Peptidyl-tRNA hydrolase from Escherichia coli O81 (strain ED1a).